We begin with the raw amino-acid sequence, 228 residues long: Endonuclease V (228 aa).

D43 and D109 together coordinate Mg(2+).

It belongs to the endonuclease V family. The cofactor is Mg(2+).

It is found in the cytoplasm. The enzyme catalyses Endonucleolytic cleavage at apurinic or apyrimidinic sites to products with a 5'-phosphate.. In terms of biological role, DNA repair enzyme involved in the repair of deaminated bases. Selectively cleaves double-stranded DNA at the second phosphodiester bond 3' to a deoxyinosine leaving behind the intact lesion on the nicked DNA. The protein is Endonuclease V of Dictyoglomus turgidum (strain DSM 6724 / Z-1310).